We begin with the raw amino-acid sequence, 296 residues long: NAD kinase (296 aa).

Aspartate 72 functions as the Proton acceptor in the catalytic mechanism. Residues 72–73 (DG), 146–147 (ND), arginine 157, lysine 174, aspartate 176, 187–192 (TAYALS), and glutamine 247 contribute to the NAD(+) site.

The protein belongs to the NAD kinase family. A divalent metal cation is required as a cofactor.

It localises to the cytoplasm. It catalyses the reaction NAD(+) + ATP = ADP + NADP(+) + H(+). In terms of biological role, involved in the regulation of the intracellular balance of NAD and NADP, and is a key enzyme in the biosynthesis of NADP. Catalyzes specifically the phosphorylation on 2'-hydroxyl of the adenosine moiety of NAD to yield NADP. This Pseudomonas fluorescens (strain ATCC BAA-477 / NRRL B-23932 / Pf-5) protein is NAD kinase.